The primary structure comprises 2147 residues: Non-reducing polyketide synthase albA (2147 aa).

An N-terminal acylcarrier protein transacylase domain (SAT) region spans residues 8–244 (YLFGDQTSDI…VKAPIHGPYH (237 aa)). The Ketosynthase family 3 (KS3) domain maps to 375–806 (CSKIAIIGMS…GGNTAILLED (432 aa)). Active-site for beta-ketoacyl synthase activity residues include C547, H682, and H724. The malonyl-CoA:ACP transacylase (MAT) domain stretch occupies residues 912 to 1232 (FVFTGQGAQY…LSSLHLAGID (321 aa)). Catalysis depends on S1001, which acts as the For acyl/malonyl transferase activity. The interval 1286-1425 (HEFLTTAAQK…CTVRFFDCAA (140 aa)) is N-terminal hotdog fold. A PKS/mFAS DH domain is found at 1286–1598 (HEFLTTAAQK…FQGLSRKILD (313 aa)). The interval 1290–1603 (TTAAQKVIET…RKILDTVLPP (314 aa)) is product template (PT) domain. The active-site Proton acceptor; for dehydratase activity is the H1326. The C-terminal hotdog fold stretch occupies residues 1452-1598 (DAHRLGRGMV…FQGLSRKILD (147 aa)). D1511 (proton donor; for dehydratase activity) is an active-site residue. Residues 1608 to 1637 (KGPARPAASAQKAAPAATSKSRASAPAPAK) are disordered. A compositionally biased stretch (low complexity) spans 1610–1637 (PARPAASAQKAAPAATSKSRASAPAPAK). Positions 1642–1719 (PSAPSLVKRA…DFKQFLAPMS (78 aa)) constitute a Carrier 1 domain. The residue at position 1679 (S1679) is an O-(pantetheine 4'-phosphoryl)serine. Positions 1719 to 1759 (SQGEASDGSTSDPESSSSFNGGSSTDESSAGSPVSSPPNEK) are disordered. Residues 1724-1747 (SDGSTSDPESSSSFNGGSSTDESS) show a composition bias toward low complexity. In terms of domain architecture, Carrier 2 spans 1760-1837 (IEQHATMKEI…DVEDALGLKP (78 aa)). S1797 is subject to O-(pantetheine 4'-phosphoryl)serine. Positions 1873-2145 (SPHPRSTSIL…ELGSFIGNAM (273 aa)) are claisen cyclase domain. The For Claisen cyclase activity role is filled by S1963.

The catalysed reaction is 6 malonyl-CoA + acetyl-CoA + 6 H(+) = naphtopyrone YWA1 + 6 CO2 + 7 CoA + H2O. It participates in secondary metabolite biosynthesis. Its function is as follows. Non-reducing polyketide synthase involved in the biosynthesis of bifonsecin B, a dimeric gamma-naphthopyrone. The first step in the biosynthesis of bifonsecin B is the production of gamma-naphthopyrone precursor YWA1 by the non-reducing polyketide synthase albA, via condensation of one acetyl-CoA starter unit with 6 malonyl-CoA units. YWA1 is then methylated by bfoE at position C-6 to yield foncesin which is further methylated at position C-8 by bfoD to produce fonsecin B. A key enzyme in the biosynthetic pathway is the cytochrome P450 monooxygenase bfoB which catalyzes the oxidative dimerization of fonsecin B to bifonsecin B. Bfob also catalyzes the oxidative dimerization of rubrofusarin B into nigerone. The stereoselectivity of bfoB is influenced by the two natural monomeric substrates; homodimerization of fonsecin B yields a stereochemically pure biaryl, M-foncerine B, while rubrofusarin B yields a mixture of enantiomers M- and P-nigerone. This chain is Non-reducing polyketide synthase albA, found in Aspergillus brasiliensis (strain CBS 101740 / IMI 381727 / IBT 21946).